The following is a 419-amino-acid chain: Effector protein BipC (419 aa).

2 disordered regions span residues 62–91 (VAGS…TVSG) and 338–402 (LQSG…AKSQ). Basic and acidic residues-rich tracts occupy residues 71–91 (ELAR…TVSG) and 380–392 (TRDE…REAA).

The protein belongs to the SctB/SipC family.

The protein localises to the secreted. This Burkholderia mallei (strain NCTC 10247) protein is Effector protein BipC (bipC).